Here is a 427-residue protein sequence, read N- to C-terminus: 3-phosphoshikimate 1-carboxyvinyltransferase (427 aa).

Residues K22, S23, and R27 each contribute to the 3-phosphoshikimate site. A phosphoenolpyruvate-binding site is contributed by K22. Residues G96 and R124 each coordinate phosphoenolpyruvate. 3-phosphoshikimate contacts are provided by S169, S170, Q171, S197, D313, N336, and K340. Position 171 (Q171) interacts with phosphoenolpyruvate. D313 functions as the Proton acceptor in the catalytic mechanism. Positions 344, 386, and 411 each coordinate phosphoenolpyruvate.

The protein belongs to the EPSP synthase family. Monomer.

The protein localises to the cytoplasm. The catalysed reaction is 3-phosphoshikimate + phosphoenolpyruvate = 5-O-(1-carboxyvinyl)-3-phosphoshikimate + phosphate. It participates in metabolic intermediate biosynthesis; chorismate biosynthesis; chorismate from D-erythrose 4-phosphate and phosphoenolpyruvate: step 6/7. Functionally, catalyzes the transfer of the enolpyruvyl moiety of phosphoenolpyruvate (PEP) to the 5-hydroxyl of shikimate-3-phosphate (S3P) to produce enolpyruvyl shikimate-3-phosphate and inorganic phosphate. In Escherichia coli O8 (strain IAI1), this protein is 3-phosphoshikimate 1-carboxyvinyltransferase.